A 105-amino-acid chain; its full sequence is UPF0235 protein Mext_2130 (105 aa).

Belongs to the UPF0235 family.

This chain is UPF0235 protein Mext_2130, found in Methylorubrum extorquens (strain PA1) (Methylobacterium extorquens).